We begin with the raw amino-acid sequence, 310 residues long: Protoheme IX farnesyltransferase (310 aa).

Transmembrane regions (helical) follow at residues Leu37–Leu57, Leu64–Asn84, Ile113–His133, Val134–Leu154, Thr159–Thr181, Ile186–Met208, Arg215–Trp237, Met257–Ile277, and Met290–Leu310.

Belongs to the UbiA prenyltransferase family. Protoheme IX farnesyltransferase subfamily. As to quaternary structure, interacts with CtaA.

It localises to the cell membrane. The catalysed reaction is heme b + (2E,6E)-farnesyl diphosphate + H2O = Fe(II)-heme o + diphosphate. The protein operates within porphyrin-containing compound metabolism; heme O biosynthesis; heme O from protoheme: step 1/1. In terms of biological role, converts heme B (protoheme IX) to heme O by substitution of the vinyl group on carbon 2 of heme B porphyrin ring with a hydroxyethyl farnesyl side group. This is Protoheme IX farnesyltransferase from Exiguobacterium sibiricum (strain DSM 17290 / CCUG 55495 / CIP 109462 / JCM 13490 / 255-15).